The primary structure comprises 488 residues: GTPase Der (488 aa).

The EngA-type G 1 domain maps to 3-166; that stretch reads PVVALVGRPN…YALAPYAEAL (164 aa). Residues 9–16, 56–60, and 118–121 contribute to the GTP site; these read GRPNVGKS, DTGGI, and NKVD. A disordered region spans residues 168–192; that stretch reads LNRDGDDEEEKEEREYTEEEAEAEQ. Positions 172-190 are enriched in acidic residues; the sequence is GDDEEEKEEREYTEEEAEA. In terms of domain architecture, EngA-type G 2 spans 200 to 373; that stretch reads IKLAVIGKPN…SVQEAYESAT (174 aa). Residues 206–213, 253–257, and 318–321 contribute to the GTP site; these read GKPNVGKS, DTAGV, and NKWD. A KH-like domain is found at 374–458; the sequence is RRVSTSMLTR…PIQVRFQDGD (85 aa).

The protein belongs to the TRAFAC class TrmE-Era-EngA-EngB-Septin-like GTPase superfamily. EngA (Der) GTPase family. In terms of assembly, associates with the 50S ribosomal subunit.

GTPase that plays an essential role in the late steps of ribosome biogenesis. This Shewanella woodyi (strain ATCC 51908 / MS32) protein is GTPase Der.